A 572-amino-acid chain; its full sequence is Urease subunit alpha (572 aa).

One can recognise a Urease domain in the interval 136-572 (GGIDTHIHWI…VPLAQRYFLF (437 aa)). Ni(2+) is bound by residues His-141, His-143, and Lys-224. The residue at position 224 (Lys-224) is an N6-carboxylysine. Residue His-226 coordinates substrate. His-253 and His-279 together coordinate Ni(2+). His-327 serves as the catalytic Proton donor. Ni(2+) is bound at residue Asp-367.

The protein belongs to the metallo-dependent hydrolases superfamily. Urease alpha subunit family. In terms of assembly, heterotrimer of UreA (gamma), UreB (beta) and UreC (alpha) subunits. Three heterotrimers associate to form the active enzyme. Ni cation is required as a cofactor. Post-translationally, carboxylation allows a single lysine to coordinate two nickel ions.

It is found in the cytoplasm. It catalyses the reaction urea + 2 H2O + H(+) = hydrogencarbonate + 2 NH4(+). Its pathway is nitrogen metabolism; urea degradation; CO(2) and NH(3) from urea (urease route): step 1/1. In Actinobacillus pleuropneumoniae (Haemophilus pleuropneumoniae), this protein is Urease subunit alpha.